Here is a 529-residue protein sequence, read N- to C-terminus: Potassium voltage-gated channel subfamily A member 6 (529 aa).

The interval 1–35 (MRSEKSLTLAAPGEVRGPEGEQQDAGEFQEAEGGG) is disordered. The Cytoplasmic portion of the chain corresponds to 1-171 (MRSEKSLTLA…LLFEYPESSG (171 aa)). The residue at position 3 (Ser3) is a Phosphoserine. The span at 21-30 (EQQDAGEFQE) shows a compositional bias: acidic residues. A helical transmembrane segment spans residues 172 to 193 (PARGIAIVSVLVILISIVIFCL). The Extracellular segment spans residues 194-262 (ETLPQFRADG…TLGGSFFTDP (69 aa)). The interval 203–238 (GRGGSNEGSGTRLSPASRSHEEEDEDEDSYAFPGSI) is disordered. Residues 210–219 (GSGTRLSPAS) show a composition bias toward polar residues. Residues 263–284 (FFLVETLCIVWFTFELLVRFSA) form a helical membrane-spanning segment. Cys285 is lipidated: S-palmitoyl cysteine. At 285–295 (CPSKAAFFRNI) the chain is on the cytoplasmic side. Residues 296–316 (MNIIDLVAIFPYFITLGTELV) traverse the membrane as a helical segment. Over 317 to 337 (QRHEQQSVSGGSGQNGQQAMS) the chain is Extracellular. A helical; Voltage-sensor transmembrane segment spans residues 338 to 358 (LAILRVIRLVRVFRIFKLSRH). The Cytoplasmic portion of the chain corresponds to 359–373 (SKGLQILGKTLQASM). Residues 360–373 (KGLQILGKTLQASM) are S4-S5 linker. A helical transmembrane segment spans residues 374 to 395 (RELGLLIFFLFIGVILFSSAVY). Over 396-409 (FAEADDVDSLFPSI) the chain is Extracellular. An intramembrane region (helical) is located at residues 410 to 421 (PDAFWWAVVTMT). Residues 422 to 427 (TVGYGD) carry the Selectivity filter motif. Residues 422 to 429 (TVGYGDMY) lie within the membrane without spanning it. Residues 430–436 (PMTVGGK) lie on the Extracellular side of the membrane. The chain crosses the membrane as a helical span at residues 437–465 (IVGSLCAIAGVLTIALPVPVIVSNFNYFY). At 466-529 (HRETEQEEQG…YAEKRMLTEV (64 aa)) the chain is on the cytoplasmic side. Residues 488–513 (DLKATDNGLGKPDFAEASRERRPSYL) form a disordered region. Residues 500–510 (DFAEASRERRP) show a composition bias toward basic and acidic residues. Phosphoserine; by PKA is present on Ser511. A PDZ-binding motif is present at residues 527–529 (TEV).

This sequence belongs to the potassium channel family. A (Shaker) (TC 1.A.1.2) subfamily. Kv1.6/KCNA6 sub-subfamily. Homotetramer and heterotetramer of potassium channel proteins. Interacts with KCNAB1 and KCNAB2.

The protein resides in the cell membrane. It catalyses the reaction K(+)(in) = K(+)(out). Functionally, voltage-gated potassium channel that mediates transmembrane potassium transport in excitable membranes. Forms tetrameric potassium-selective channels through which potassium ions pass in accordance with their electrochemical gradient. The channel alternates between opened and closed conformations in response to the voltage difference across the membrane. Can form functional homotetrameric channels and heterotetrameric channels that contain variable proportions of KCNA1, KCNA2, KCNA4, KCNA6, and possibly other family members as well; channel properties depend on the type of alpha subunits that are part of the channel. Channel properties are modulated by cytoplasmic beta subunits that regulate the subcellular location of the alpha subunits and promote rapid inactivation. Homotetrameric channels display rapid activation and slow inactivation. In Mus musculus (Mouse), this protein is Potassium voltage-gated channel subfamily A member 6 (Kcna6).